A 281-amino-acid polypeptide reads, in one-letter code: Pantothenate synthetase (281 aa).

29–36 is a binding site for ATP; the sequence is MGYLHEGH. His-36 acts as the Proton donor in catalysis. A (R)-pantoate-binding site is contributed by Gln-60. Gln-60 is a beta-alanine binding site. ATP is bound at residue 146–149; the sequence is GQKD. Residue Gln-152 coordinates (R)-pantoate. ATP-binding positions include Val-175 and 183-186; that span reads MSSR.

The protein belongs to the pantothenate synthetase family. As to quaternary structure, homodimer.

Its subcellular location is the cytoplasm. It carries out the reaction (R)-pantoate + beta-alanine + ATP = (R)-pantothenate + AMP + diphosphate + H(+). Its pathway is cofactor biosynthesis; (R)-pantothenate biosynthesis; (R)-pantothenate from (R)-pantoate and beta-alanine: step 1/1. In terms of biological role, catalyzes the condensation of pantoate with beta-alanine in an ATP-dependent reaction via a pantoyl-adenylate intermediate. This chain is Pantothenate synthetase, found in Pseudothermotoga lettingae (strain ATCC BAA-301 / DSM 14385 / NBRC 107922 / TMO) (Thermotoga lettingae).